A 500-amino-acid chain; its full sequence is Protein FAM83F (500 aa).

An N-acetylalanine modification is found at A2. Residues 2 to 300 (AESQLNCLDE…LYAISEEVDL (299 aa)) form a DUF1669 region. S4 bears the Phosphoserine mark. Disordered stretches follow at residues 82-109 (NARGKSKAKAKAPAPAPAESGESLAYWP), 347-366 (QQREAGGNPEGQEEGASGGE), and 391-500 (IPLG…CVIS). Residues 397 to 419 (SQKDGRMVSHMHRDLKPKSREAP) show a composition bias toward basic and acidic residues. Composition is skewed to low complexity over residues 425-442 (GEAARGEAAPARRFSSRL) and 458-468 (SSVSTETSEVE). The segment covering 477–500 (ENSSADISGKTSPSSAKPSNCVIS) has biased composition (polar residues). Residue S479 is modified to Phosphoserine.

Belongs to the FAM83 family. Directly interacts (via DUF1669) with CSNK1A1 and CSNK1A1L.

The protein resides in the cell membrane. The protein is Protein FAM83F (FAM83F) of Homo sapiens (Human).